A 414-amino-acid polypeptide reads, in one-letter code: Eukaryotic initiation factor 4A (414 aa).

The Q motif signature appears at 41-69 (ESFDDMGLQENLLRGIYAYGFEKPSAIQQ). Residues 72–242 (IVPFCKGLDV…RKFMNKPVRI (171 aa)) enclose the Helicase ATP-binding domain. 85 to 92 (AQSGTGKT) is an ATP binding site. The short motif at 190-193 (DEAD) is the DEAD box element. Residues 253 to 414 (GIKQFYVNVE…ELPANVADLL (162 aa)) enclose the Helicase C-terminal domain.

It belongs to the DEAD box helicase family. eIF4A subfamily. As to quaternary structure, eIF4F is a multi-subunit complex, the composition of which varies with external and internal environmental conditions. It is composed of at least EIF4A, EIF4E and EIF4G.

It carries out the reaction ATP + H2O = ADP + phosphate + H(+). ATP-dependent RNA helicase which is a subunit of the eIF4F complex involved in cap recognition and is required for mRNA binding to ribosome. In the current model of translation initiation, eIF4A unwinds RNA secondary structures in the 5'-UTR of mRNAs which is necessary to allow efficient binding of the small ribosomal subunit, and subsequent scanning for the initiator codon. The protein is Eukaryotic initiation factor 4A of Triticum aestivum (Wheat).